Here is a 211-residue protein sequence, read N- to C-terminus: MSTNDANFMLFSNINDCSYVSCYCEENVWKLCEQVKKTYPSELPKCYAVFVSNERRTVPLWRQKAGRGDEKLVIWDYHVFFMHNPSPNRCLVFDLDTTLPFPTYFHKYVTETFRSDYALTPEHHRFFRVIPAEKYLAEFSSDRRHMRRPDGSWIKPPPSYPPIQTSASTHSLDDFICMKPGKGPGAVYDLLHFVQQFYKPPDRNIGTKTQN.

Residues Cys24, His78, and Asp94 contribute to the active site.

The protein belongs to the NTAQ1 family. As to quaternary structure, monomer.

It catalyses the reaction N-terminal L-glutaminyl-[protein] + H2O = N-terminal L-glutamyl-[protein] + NH4(+). Mediates the side-chain deamidation of N-terminal glutamine residues to glutamate, an important step in N-end rule pathway of protein degradation. Conversion of the resulting N-terminal glutamine to glutamate renders the protein susceptible to arginylation, polyubiquitination and degradation as specified by the N-end rule. Does not act on substrates with internal or C-terminal glutamine and does not act on non-glutamine residues in any position. This chain is Protein N-terminal glutamine amidohydrolase (tun), found in Anopheles gambiae (African malaria mosquito).